The chain runs to 244 residues: Ribonuclease HII (244 aa).

An RNase H type-2 domain is found at 31–222 (RLIAGVDEAG…VRLALQGREG (192 aa)). Positions 37, 38, and 130 each coordinate a divalent metal cation.

The protein belongs to the RNase HII family. It depends on Mn(2+) as a cofactor. The cofactor is Mg(2+).

It localises to the cytoplasm. It carries out the reaction Endonucleolytic cleavage to 5'-phosphomonoester.. Its function is as follows. Endonuclease that specifically degrades the RNA of RNA-DNA hybrids. This is Ribonuclease HII from Xanthomonas axonopodis pv. citri (strain 306).